Reading from the N-terminus, the 230-residue chain is Nicotinamide riboside kinase (230 aa).

ATP is bound at residue 12 to 20; that stretch reads GASCSGKST. 2 residues coordinate Mg(2+): Ser19 and Asp38. Asp38 (proton acceptor) is an active-site residue. Substrate is bound by residues 38–41 and 56–57; these read DDFY and WD. Arg153 provides a ligand contact to ATP. Substrate-binding positions include Arg154 and 159-160; that span reads GY. Residues 157 to 159 and 203 to 205 contribute to the ATP site; these read RTG and RIQ.

This sequence belongs to the uridine kinase family. NRK subfamily.

The enzyme catalyses beta-nicotinamide D-riboside + ATP = beta-nicotinamide D-ribonucleotide + ADP + H(+). The catalysed reaction is beta-D-ribosylnicotinate + ATP = nicotinate beta-D-ribonucleotide + ADP + H(+). The protein operates within cofactor biosynthesis; NAD(+) biosynthesis. Its function is as follows. Catalyzes the phosphorylation of nicotinamide riboside (NR) and nicotinic acid riboside (NaR) to form nicotinamide mononucleotide (NMN) and nicotinic acid mononucleotide (NaMN). This chain is Nicotinamide riboside kinase (nrk1), found in Schizosaccharomyces pombe (strain 972 / ATCC 24843) (Fission yeast).